A 306-amino-acid polypeptide reads, in one-letter code: Cytochrome P450 monooxygenase aclO (306 aa).

Cys237 lines the heme pocket.

This sequence belongs to the cytochrome P450 family. It depends on heme as a cofactor.

The protein operates within mycotoxin biosynthesis. Cytochrome P450 monooxygenase; part of the gene cluster that mediates the biosynthesis of aspirochlorine (or antibiotic A30641), an unusual halogenated spiro compound with distinctive antifungal properties due to selective inhibition of protein biosynthesis, and which is also active against bacteria, viruses, and murine tumor cells. The non-ribosomal peptide synthetase (NRPS) aclP is responsible the formation of the diketopiperazine (DKP) core from the condensation of 2 phenylalanine residues. One Phe residue is tailored into chlorotyrosine by hydroxylation and chlorination, whereas the second Phe undergoes an unprecedented C-C bond cleavage to be converted into glycine. After formation of the DKP, sulfur is incorporated into the DKP by conjugation with glutathione by aclG, followed by its stepwise degradation to the thiol by aclI, aclJ and aclK, and the dithiol oxidation by aclT. In addition, oxygenases (aclB, aclC, aclL and aclO) and O-methyltransferases (aclM and aclU) act as tailoring enzymes to produce the intermediate dechloroaspirochlorine. Ultimately, chlorination of dechloroaspirochlorine by the halogenase aclH is the last step in the aspirochlorine pathway. The polypeptide is Cytochrome P450 monooxygenase aclO (Aspergillus oryzae (strain ATCC 42149 / RIB 40) (Yellow koji mold)).